The chain runs to 419 residues: Putative zinc metalloprotease SPy_1963/M5005_Spy1674 (419 aa).

A Zn(2+)-binding site is contributed by histidine 18. The active site involves glutamate 19. Histidine 22 lines the Zn(2+) pocket. Transmembrane regions (helical) follow at residues 169-191 (LITN…ILLV), 301-323 (LAWS…FSLN), 343-365 (LESV…LIPI), and 392-411 (AYIT…AVTW). The PDZ domain maps to 175–274 (GPMNNFILGI…LKTVAVKPQK (100 aa)).

This sequence belongs to the peptidase M50B family. Zn(2+) serves as cofactor.

It is found in the cell membrane. This chain is Putative zinc metalloprotease SPy_1963/M5005_Spy1674, found in Streptococcus pyogenes serotype M1.